The primary structure comprises 354 residues: E2F transcription factor-like E2FF (354 aa).

The DNA-binding element occupies 21-86 (RKEKSLGVLV…RGKNQYSWKG (66 aa)). Positions 104–143 (ERLGYSSSNNSDKVSNGCEREEPLTLTPDDQENSSSSKMD) are disordered. Positions 108 to 117 (YSSSNNSDKV) are enriched in polar residues. The DNA-binding element occupies 145–225 (KKEKSLWLLA…TRKPAYRWLG (81 aa)).

Belongs to the E2F/DP family. High expression in young cotyledons and leaves, hypocotyls, shoot apical meristem, roots and mature pollen grains, moderate in developing trichomes, flowers and at early stages of developing anthers, and barely detectable in mature leaves. Not detected in primary root meristem, emerging lateral roots, pistils, developing embryos and siliques.

Its subcellular location is the nucleus. The protein localises to the cytoplasm. Functionally, inhibitor of E2F-dependent activation of gene expression. Binds specifically the E2 recognition site without interacting with DP proteins and prevents transcription activation by E2F/DP heterodimers. Does not bind retinoblastoma-related proteins. Acts as a growth regulator but is not associated with changes in the expression of cell cycle marker genes or in nuclear ploidy levels. Has no effect on cell proliferation, but may repress cell wall biosynthesis genes during cell elongation in differentiated cells. In Arabidopsis thaliana (Mouse-ear cress), this protein is E2F transcription factor-like E2FF (E2FF).